The sequence spans 245 residues: Eukaryotic translation initiation factor 6 (245 aa).

Tyr-113 carries the post-translational modification Phosphotyrosine. Thr-165 is subject to Phosphothreonine. At Ser-166 the chain carries Phosphoserine. Residues Ser-174 and Ser-175 each carry the phosphoserine; by CK1 modification. Ser-235 is modified (phosphoserine; by PKC). Phosphoserine is present on residues Ser-239 and Ser-243.

The protein belongs to the eIF-6 family. As to quaternary structure, monomer. Associates with the 60S ribosomal subunit. Interacts with RACK1. Interacts with DICER1, AGO2, TARBP2, MOV10 and RPL7A; they form a large RNA-induced silencing complex (RISC). In terms of processing, phosphorylation at Ser-174 and Ser-175 by CSNK1D/CK1 promotes nuclear export. Post-translationally, ufmylated by UFL1.

The protein localises to the cytoplasm. It is found in the nucleus. The protein resides in the nucleolus. Its function is as follows. Binds to the 60S ribosomal subunit and prevents its association with the 40S ribosomal subunit to form the 80S initiation complex in the cytoplasm. Behaves as a stimulatory translation initiation factor downstream insulin/growth factors. Is also involved in ribosome biogenesis. Associates with pre-60S subunits in the nucleus and is involved in its nuclear export. Cytoplasmic release of TIF6 from 60S subunits and nuclear relocalization is promoted by a RACK1 (RACK1)-dependent protein kinase C activity. In tissues responsive to insulin, controls fatty acid synthesis and glycolysis by exerting translational control of adipogenic transcription factors such as CEBPB, CEBPD and ATF4 that have G/C rich or uORF in their 5'UTR. Required for ROS-dependent megakaryocyte maturation and platelets formation, controls the expression of mitochondrial respiratory chain genes involved in reactive oxygen species (ROS) synthesis. Involved in miRNA-mediated gene silencing by the RNA-induced silencing complex (RISC). Required for both miRNA-mediated translational repression and miRNA-mediated cleavage of complementary mRNAs by RISC. Modulates cell cycle progression and global translation of pre-B cells, its activation seems to be rate-limiting in tumorigenesis and tumor growth. This is Eukaryotic translation initiation factor 6 from Bos taurus (Bovine).